We begin with the raw amino-acid sequence, 332 residues long: Acetyl-coenzyme A carboxylase carboxyl transferase subunit beta (332 aa).

The CoA carboxyltransferase N-terminal domain maps to 24 to 293; that stretch reads LWIKCPDSGH…PEVIVESEPE (270 aa). The disordered stretch occupies residues 288-332; the sequence is VESEPEPEPEPVVAEIIPPTSDLPVSAPAPAPVAAQTPAPAAPSA. A compositionally biased stretch (low complexity) spans 298 to 332; the sequence is PVVAEIIPPTSDLPVSAPAPAPVAAQTPAPAAPSA.

The protein belongs to the AccD/PCCB family. Acetyl-CoA carboxylase is a heterohexamer composed of biotin carboxyl carrier protein (AccB), biotin carboxylase (AccC) and two subunits each of ACCase subunit alpha (AccA) and ACCase subunit beta (AccD).

Its subcellular location is the cytoplasm. It catalyses the reaction N(6)-carboxybiotinyl-L-lysyl-[protein] + acetyl-CoA = N(6)-biotinyl-L-lysyl-[protein] + malonyl-CoA. The protein operates within lipid metabolism; malonyl-CoA biosynthesis; malonyl-CoA from acetyl-CoA: step 1/1. Component of the acetyl coenzyme A carboxylase (ACC) complex. Biotin carboxylase (BC) catalyzes the carboxylation of biotin on its carrier protein (BCCP) and then the CO(2) group is transferred by the transcarboxylase to acetyl-CoA to form malonyl-CoA. The sequence is that of Acetyl-coenzyme A carboxylase carboxyl transferase subunit beta from Rhodopseudomonas palustris (strain BisB18).